The chain runs to 468 residues: MFRQEQPLAEGSFAPMGSLQPDAGNASWNGTEAPGGGARATPYSLQVTLTLVCLAGLLMLFTVFGNVLVIIAVFTSRALKAPQNLFLVSLASADILVATLVIPFSLANEVMGYWYFGKAWCEIYLALDVLFCTSSIVHLCAISLDRYWSITQAIEYNLKRTPRRIKAIIVTVWVISAVISFPPLISFEKKRGRSGQPSAEPRCEINDQKWYVISSSIGSFFAPCLIMILVYVRIYQIAKRRTRVPPSRRGPDATAAELPGSAERRPNGLGPERGGVGPVGAEVESLQVQLNGAPGEPAPAGPPDADALDLEESSSSEHAERPPGSRRSERGPRAKGKARASQVKPGDSLPRRGPGATGLGAPTAGPAEERSGGGAKASRWRGRQNREKRFTFVLAVVIGVFVVCWFPFFFTYTLTAIGCPVPPTLFKFFFWFGYCNSSLNPVIYTIFNHDFRRAFKKILCRGDRKRIV.

The Extracellular segment spans residues 1–48; sequence MFRQEQPLAEGSFAPMGSLQPDAGNASWNGTEAPGGGARATPYSLQVT. N-linked (GlcNAc...) asparagine glycosylation is found at N25 and N29. The chain crosses the membrane as a helical span at residues 49–74; sequence LTLVCLAGLLMLFTVFGNVLVIIAVF. Residues 75-85 lie on the Cytoplasmic side of the membrane; the sequence is TSRALKAPQNL. The helical transmembrane segment at 86–111 threads the bilayer; it reads FLVSLASADILVATLVIPFSLANEVM. Residues 112–121 lie on the Extracellular side of the membrane; that stretch reads GYWYFGKAWC. C121 and C203 are joined by a disulfide. The chain crosses the membrane as a helical span at residues 122-144; that stretch reads EIYLALDVLFCTSSIVHLCAISL. Topologically, residues 145–164 are cytoplasmic; sequence DRYWSITQAIEYNLKRTPRR. A helical membrane pass occupies residues 165-188; it reads IKAIIVTVWVISAVISFPPLISFE. Over 189 to 207 the chain is Extracellular; the sequence is KKRGRSGQPSAEPRCEIND. A helical transmembrane segment spans residues 208–232; the sequence is QKWYVISSSIGSFFAPCLIMILVYV. Topologically, residues 233-392 are cytoplasmic; the sequence is RIYQIAKRRT…RQNREKRFTF (160 aa). 2 disordered regions span residues 242-279 and 291-381; these read TRVPPSRRGPDATAAELPGSAERRPNGLGPERGGVGPV and NGAP…SRWR. The segment covering 315–332 has biased composition (basic and acidic residues); that stretch reads SSEHAERPPGSRRSERGP. S348 carries the post-translational modification Phosphoserine. Residues 351–366 are compositionally biased toward low complexity; sequence RRGPGATGLGAPTAGP. R370 is modified (omega-N-methylarginine). The helical transmembrane segment at 393 to 417 threads the bilayer; that stretch reads VLAVVIGVFVVCWFPFFFTYTLTAI. Residues 418–427 are Extracellular-facing; that stretch reads GCPVPPTLFK. Residues 428–448 form a helical membrane-spanning segment; that stretch reads FFFWFGYCNSSLNPVIYTIFN. Residues 449-468 are Cytoplasmic-facing; it reads HDFRRAFKKILCRGDRKRIV. C460 carries S-palmitoyl cysteine lipidation.

It belongs to the G-protein coupled receptor 1 family. Adrenergic receptor subfamily. ADRA2A sub-subfamily. In terms of assembly, component of the ADA2A-containing complex (ATAC), composed of KAT14, KAT2A, TADA2L, TADA3L, ZZ3, MBIP, WDR5, YEATS2, CCDC101 and DR1. Retina, brain and olfactory lobe.

Its subcellular location is the cell membrane. Alpha-2 adrenergic receptors mediate the catecholamine-induced inhibition of adenylate cyclase through the action of G proteins. Component of the ATAC complex, a complex with histone acetyltransferase activity on histones H3 and H4. The protein is Alpha-2A adrenergic receptor of Bos taurus (Bovine).